A 560-amino-acid polypeptide reads, in one-letter code: DNA ligase B (560 aa).

K124 acts as the N6-AMP-lysine intermediate in catalysis.

Belongs to the NAD-dependent DNA ligase family. LigB subfamily.

The enzyme catalyses NAD(+) + (deoxyribonucleotide)n-3'-hydroxyl + 5'-phospho-(deoxyribonucleotide)m = (deoxyribonucleotide)n+m + AMP + beta-nicotinamide D-nucleotide.. Its function is as follows. Catalyzes the formation of phosphodiester linkages between 5'-phosphoryl and 3'-hydroxyl groups in double-stranded DNA using NAD as a coenzyme and as the energy source for the reaction. The protein is DNA ligase B of Escherichia coli O6:H1 (strain CFT073 / ATCC 700928 / UPEC).